The primary structure comprises 466 residues: UDP-N-acetylmuramate--L-alanine ligase (466 aa).

119–125 contacts ATP; that stretch reads GTHGKTT.

Belongs to the MurCDEF family.

Its subcellular location is the cytoplasm. The catalysed reaction is UDP-N-acetyl-alpha-D-muramate + L-alanine + ATP = UDP-N-acetyl-alpha-D-muramoyl-L-alanine + ADP + phosphate + H(+). Its pathway is cell wall biogenesis; peptidoglycan biosynthesis. Functionally, cell wall formation. The protein is UDP-N-acetylmuramate--L-alanine ligase of Cytophaga hutchinsonii (strain ATCC 33406 / DSM 1761 / CIP 103989 / NBRC 15051 / NCIMB 9469 / D465).